Here is a 422-residue protein sequence, read N- to C-terminus: Phosphoserine aminotransferase 2, chloroplastic (422 aa).

A chloroplast-targeting transit peptide spans 1–50 (MAASTNSFLIGNQTQIPSLKPKSISQSFIHFTKPNTINLTTRTKSVSIRC). Position 51 is an N-acetylalanine (Ala51). Arg101 is a binding site for L-glutamate. Pyridoxal 5'-phosphate is bound by residues 135 to 136 (AT), Trp161, Thr211, Asp233, and Gln256. Lys257 is modified (N6-(pyridoxal phosphate)lysine). 298 to 299 (NT) lines the pyridoxal 5'-phosphate pocket.

It belongs to the class-V pyridoxal-phosphate-dependent aminotransferase family. SerC subfamily. Requires pyridoxal 5'-phosphate as cofactor.

The protein resides in the plastid. The protein localises to the chloroplast. The catalysed reaction is O-phospho-L-serine + 2-oxoglutarate = 3-phosphooxypyruvate + L-glutamate. It carries out the reaction 4-(phosphooxy)-L-threonine + 2-oxoglutarate = (R)-3-hydroxy-2-oxo-4-phosphooxybutanoate + L-glutamate. The protein operates within amino-acid biosynthesis; L-serine biosynthesis; L-serine from 3-phospho-D-glycerate: step 2/3. Involved in the plastidial phosphorylated pathway of serine biosynthesis (PPSB). Catalyzes the reversible conversion of 3-phosphohydroxypyruvate to phosphoserine. The protein is Phosphoserine aminotransferase 2, chloroplastic (PSAT2) of Arabidopsis thaliana (Mouse-ear cress).